The primary structure comprises 235 residues: Class B acid phosphatase (235 aa).

An N-terminal signal peptide occupies residues 1-22; it reads MKNLVKLSLIAMLTAATLPAMA. Asp67 functions as the Nucleophile in the catalytic mechanism. Mg(2+) contacts are provided by Asp67 and Asp69. Residue Asp69 is the Proton donor of the active site. Residues 135 to 136 and Lys175 each bind substrate; that span reads TG. Residue Asp190 coordinates Mg(2+).

This sequence belongs to the class B bacterial acid phosphatase family. In terms of assembly, homotetramer. Requires Mg(2+) as cofactor.

The protein resides in the periplasm. It carries out the reaction a phosphate monoester + H2O = an alcohol + phosphate. Dephosphorylates several organic phosphate monoesters. Also has a phosphotransferase activity catalyzing the transfer of low-energy phosphate groups from organic phosphate monoesters to free hydroxyl groups of various organic compounds. In Aggregatibacter actinomycetemcomitans serotype C (strain D11S-1) (Actinobacillus actinomycetemcomitans), this protein is Class B acid phosphatase.